Reading from the N-terminus, the 454-residue chain is UDP-N-acetylmuramoylalanine--D-glutamate ligase (454 aa).

118 to 124 (GTNGKTT) contacts ATP.

The protein belongs to the MurCDEF family.

It is found in the cytoplasm. It catalyses the reaction UDP-N-acetyl-alpha-D-muramoyl-L-alanine + D-glutamate + ATP = UDP-N-acetyl-alpha-D-muramoyl-L-alanyl-D-glutamate + ADP + phosphate + H(+). The protein operates within cell wall biogenesis; peptidoglycan biosynthesis. Functionally, cell wall formation. Catalyzes the addition of glutamate to the nucleotide precursor UDP-N-acetylmuramoyl-L-alanine (UMA). This Thermosynechococcus vestitus (strain NIES-2133 / IAM M-273 / BP-1) protein is UDP-N-acetylmuramoylalanine--D-glutamate ligase.